A 42-amino-acid chain; its full sequence is PTITIGGPEYRTIFFDAYLGTSYVIVIKEPAEEFTTISDAVK.

In Kali turgidum (Prickly saltwort), this protein is Pollen allergen Sal k 1.